The primary structure comprises 177 residues: UPF0177 protein YxdF (177 aa).

4 helical membrane passes run 2–22, 30–50, 117–137, and 152–172; these read TLVL…KNTL, IFWL…VTVL, ALVH…SFII, and IVHS…DTFF.

This sequence belongs to the UPF0177 family.

The protein resides in the cell membrane. The sequence is that of UPF0177 protein YxdF (yxdF) from Lactococcus lactis subsp. lactis (strain IL1403) (Streptococcus lactis).